A 179-amino-acid polypeptide reads, in one-letter code: Adenine phosphoribosyltransferase (179 aa).

This sequence belongs to the purine/pyrimidine phosphoribosyltransferase family. In terms of assembly, homodimer.

It is found in the cytoplasm. The catalysed reaction is AMP + diphosphate = 5-phospho-alpha-D-ribose 1-diphosphate + adenine. Its pathway is purine metabolism; AMP biosynthesis via salvage pathway; AMP from adenine: step 1/1. In terms of biological role, catalyzes a salvage reaction resulting in the formation of AMP, that is energically less costly than de novo synthesis. This chain is Adenine phosphoribosyltransferase, found in Nitrobacter winogradskyi (strain ATCC 25391 / DSM 10237 / CIP 104748 / NCIMB 11846 / Nb-255).